Consider the following 219-residue polypeptide: Large ribosomal subunit protein uL16 (219 aa).

The protein belongs to the universal ribosomal protein uL16 family. Component of the small ribosomal subunit. Mature ribosomes consist of a small (40S) and a large (60S) subunit. The 40S subunit contains about 33 different proteins and 1 molecule of RNA (18S). The 60S subunit contains about 49 different proteins and 3 molecules of RNA (25S, 5.8S and 5S).

This Solanum melongena (Eggplant) protein is Large ribosomal subunit protein uL16 (RPL10).